The primary structure comprises 101 residues: Iron-sulfur cluster assembly protein CyaY (101 aa).

The protein belongs to the frataxin family.

Functionally, involved in iron-sulfur (Fe-S) cluster assembly. May act as a regulator of Fe-S biogenesis. In Rickettsia felis (strain ATCC VR-1525 / URRWXCal2) (Rickettsia azadi), this protein is Iron-sulfur cluster assembly protein CyaY.